Reading from the N-terminus, the 450-residue chain is Glucose-6-phosphate isomerase (450 aa).

Catalysis depends on Glu-289, which acts as the Proton donor. Catalysis depends on residues His-310 and Lys-424.

It belongs to the GPI family.

It localises to the cytoplasm. It carries out the reaction alpha-D-glucose 6-phosphate = beta-D-fructose 6-phosphate. Its pathway is carbohydrate biosynthesis; gluconeogenesis. It functions in the pathway carbohydrate degradation; glycolysis; D-glyceraldehyde 3-phosphate and glycerone phosphate from D-glucose: step 2/4. Its function is as follows. Catalyzes the reversible isomerization of glucose-6-phosphate to fructose-6-phosphate. The protein is Glucose-6-phosphate isomerase of Leptospira biflexa serovar Patoc (strain Patoc 1 / Ames).